Here is a 67-residue protein sequence, read N- to C-terminus: Protein AaeX (67 aa).

The next 2 helical transmembrane spans lie at 3 to 23 and 43 to 63; these read VLPV…ELII and LVWH…YLVS.

Belongs to the AaeX family.

The protein resides in the cell membrane. The polypeptide is Protein AaeX (Pantoea vagans (strain C9-1) (Pantoea agglomerans (strain C9-1))).